The following is a 201-amino-acid chain: Small ribosomal subunit protein uS4 (201 aa).

Residues 91–151 (SRLDNVVYRA…EKSQKMNWFE (61 aa)) form the S4 RNA-binding domain.

It belongs to the universal ribosomal protein uS4 family. As to quaternary structure, part of the 30S ribosomal subunit. Contacts protein S5. The interaction surface between S4 and S5 is involved in control of translational fidelity.

Functionally, one of the primary rRNA binding proteins, it binds directly to 16S rRNA where it nucleates assembly of the body of the 30S subunit. Its function is as follows. With S5 and S12 plays an important role in translational accuracy. The polypeptide is Small ribosomal subunit protein uS4 (Corynebacterium glutamicum (strain R)).